The following is a 376-amino-acid chain: Putative glutamate--cysteine ligase 2-3 (376 aa).

It belongs to the glutamate--cysteine ligase type 2 family. YbdK subfamily.

It carries out the reaction L-cysteine + L-glutamate + ATP = gamma-L-glutamyl-L-cysteine + ADP + phosphate + H(+). Functionally, ATP-dependent carboxylate-amine ligase which exhibits weak glutamate--cysteine ligase activity. This is Putative glutamate--cysteine ligase 2-3 from Nocardioides sp. (strain ATCC BAA-499 / JS614).